Consider the following 377-residue polypeptide: Putative F-box protein At3g13830 (377 aa).

The F-box domain maps to 6–52 (TTTMSTLPMVLVDEILSRVPITSLRSLRSTCKRWEAQSKTNLVGGKA).

This chain is Putative F-box protein At3g13830, found in Arabidopsis thaliana (Mouse-ear cress).